Here is a 466-residue protein sequence, read N- to C-terminus: RuvB-like helicase 2 (466 aa).

Position 74–81 (74–81 (GPPSTGKT)) interacts with ATP.

The protein belongs to the RuvB family. As to quaternary structure, may form heterododecamers with RVB1. Component of the SWR1 chromatin remodeling complex, the INO80 chromatin remodeling complex, and of the R2TP complex.

Its subcellular location is the nucleus. The catalysed reaction is ATP + H2O = ADP + phosphate + H(+). Functionally, DNA helicase which participates in several chromatin remodeling complexes, including the SWR1 and the INO80 complexes. The SWR1 complex mediates the ATP-dependent exchange of histone H2A for the H2A variant HZT1 leading to transcriptional regulation of selected genes by chromatin remodeling. The INO80 complex remodels chromatin by shifting nucleosomes and is involved in DNA repair. Also involved in pre-rRNA processing. This chain is RuvB-like helicase 2 (RVB2), found in Yarrowia lipolytica (strain CLIB 122 / E 150) (Yeast).